Consider the following 486-residue polypeptide: Glutamate--tRNA ligase (486 aa).

The 'HIGH' region motif lies at 11–21 (PSPTGLLHIGN). A 'KMSKS' region motif is present at residues 255 to 259 (KLSKR). Lysine 258 is an ATP binding site.

This sequence belongs to the class-I aminoacyl-tRNA synthetase family. Glutamate--tRNA ligase type 1 subfamily. As to quaternary structure, monomer.

It localises to the cytoplasm. It carries out the reaction tRNA(Glu) + L-glutamate + ATP = L-glutamyl-tRNA(Glu) + AMP + diphosphate. Catalyzes the attachment of glutamate to tRNA(Glu) in a two-step reaction: glutamate is first activated by ATP to form Glu-AMP and then transferred to the acceptor end of tRNA(Glu). In Streptococcus pneumoniae (strain Hungary19A-6), this protein is Glutamate--tRNA ligase.